The following is a 564-amino-acid chain: Probable cysteine--tRNA ligase, mitochondrial (564 aa).

Cys78 is a Zn(2+) binding site. Gly79 is a binding site for L-cysteine. A 'HIGH' region motif is present at residues 80-90; the sequence is PTVYDHAHLGH. Thr119 is an L-cysteine binding site. Residues 124–127 carry the 'KIIK' region motif; sequence KIIK. Zn(2+)-binding residues include Cys257, His282, and Glu286. His282 lines the L-cysteine pocket. Residues 317 to 321 carry the 'KMSKS' region motif; it reads KMSKS. An ATP-binding site is contributed by Lys320.

This sequence belongs to the class-I aminoacyl-tRNA synthetase family. Zn(2+) is required as a cofactor.

It localises to the mitochondrion. It carries out the reaction tRNA(Cys) + L-cysteine + ATP = L-cysteinyl-tRNA(Cys) + AMP + diphosphate. The catalysed reaction is 2 L-cysteine = S-sulfanyl-L-cysteine + L-alanine. The enzyme catalyses S-sulfanyl-L-cysteine + L-cysteine = S-disulfanyl-L-cysteine + L-alanine. It catalyses the reaction S-sulfanyl-L-cysteine + tRNA(Cys) + ATP = (S)-sulfanyl-L-cysteinyl-tRNA(Cys) + AMP + diphosphate. It carries out the reaction S-disulfanyl-L-cysteine + tRNA(Cys) + ATP = (S)-disulfanyl-L-cysteinyl-tRNA(Cys) + AMP + diphosphate. Its function is as follows. Mitochondrial cysteine-specific aminoacyl-tRNA synthetase that catalyzes the ATP-dependent ligation of cysteine to tRNA(Cys). In addition to its role as an aminoacyl-tRNA synthetase, has also cysteine persulfide synthase activity. Produces reactive persulfide species such as cysteine persulfide (CysSSH) from substrate cysteine and mediate direct incorporation of CysSSH into proteins during translations, resulting in protein persulfides and polysulfides. CysSSHs behave as potent antioxidants and cellular protectants. This is Probable cysteine--tRNA ligase, mitochondrial from Homo sapiens (Human).